A 177-amino-acid chain; its full sequence is Translation initiation factor IF-3 (177 aa).

This sequence belongs to the IF-3 family. Monomer.

It is found in the cytoplasm. Functionally, IF-3 binds to the 30S ribosomal subunit and shifts the equilibrium between 70S ribosomes and their 50S and 30S subunits in favor of the free subunits, thus enhancing the availability of 30S subunits on which protein synthesis initiation begins. The chain is Translation initiation factor IF-3 from Clostridium perfringens (strain 13 / Type A).